The sequence spans 571 residues: Urease subunit alpha (571 aa).

Residues 133-571 (GGIDTHVHFI…LPLTQRYFLF (439 aa)) form the Urease domain. Residues H138, H140, and K221 each contribute to the Ni(2+) site. K221 is modified (N6-carboxylysine). Substrate is bound at residue H223. Residues H250 and H276 each contribute to the Ni(2+) site. H324 acts as the Proton donor in catalysis. D364 is a Ni(2+) binding site.

The protein belongs to the metallo-dependent hydrolases superfamily. Urease alpha subunit family. Heterotrimer of UreA (gamma), UreB (beta) and UreC (alpha) subunits. Three heterotrimers associate to form the active enzyme. Ni cation serves as cofactor. In terms of processing, carboxylation allows a single lysine to coordinate two nickel ions.

It localises to the cytoplasm. The catalysed reaction is urea + 2 H2O + H(+) = hydrogencarbonate + 2 NH4(+). It functions in the pathway nitrogen metabolism; urea degradation; CO(2) and NH(3) from urea (urease route): step 1/1. This Staphylococcus aureus (strain bovine RF122 / ET3-1) protein is Urease subunit alpha.